Consider the following 529-residue polypeptide: Cytochrome P450 monooxygenase patI (529 aa).

Residues 1-8 lie on the Cytoplasmic side of the membrane; that stretch reads MDFTQVPP. A helical transmembrane segment spans residues 9–25; sequence SYILGVLLSSTSILFCL. Topologically, residues 26–529 are lumenal; that stretch reads KYLLRSGYRP…EAQGVFSRFD (504 aa). Residues N81 and N383 are each glycosylated (N-linked (GlcNAc...) asparagine). Residue C449 coordinates heme.

The protein belongs to the cytochrome P450 family. Requires heme as cofactor.

Its subcellular location is the endoplasmic reticulum membrane. It carries out the reaction 3-hydroxybenzyl alcohol + reduced [NADPH--hemoprotein reductase] + O2 = gentisyl alcohol + oxidized [NADPH--hemoprotein reductase] + H2O + H(+). It participates in mycotoxin biosynthesis; patulin biosynthesis. Functionally, cytochrome P450 monooxygenase; part of the gene cluster that mediates the biosynthesis of patulin, an acetate-derived tetraketide mycotoxin produced by several fungal species that shows antimicrobial properties against several bacteria. PatI catalyzes the conversion of m-hydroxybenzyl alcohol into gentisyl alcohol. The pathway begins with the synthesis of 6-methylsalicylic acid by the polyketide synthase (PKS) patK via condensation of acetate and malonate units. The 6-methylsalicylic acid decarboxylase patG then catalyzes the decarboxylation of 6-methylsalicylic acid to yield m-cresol (also known as 3-methylphenol). These first reactions occur in the cytosol. The intermediate m-cresol is then transported into the endoplasmic reticulum where the cytochrome P450 monooxygenase patH converts it to m-hydroxybenzyl alcohol, which is further converted to gentisyl alcohol by the cytochrome P450 monooxygenase patI. The oxidoreductases patJ and patO further convert gentisyl alcohol to isoepoxydon in the vacuole. PatN catalyzes then the transformation of isoepoxydon into phyllostine. The cluster protein patF is responsible for the conversion from phyllostine to neopatulin whereas the alcohol dehydrogenase patD converts neopatulin to E-ascladiol. The steps between isoepoxydon and E-ascladiol occur in the cytosol, and E-ascladiol is probably secreted to the extracellular space by one of the cluster-specific transporters patC or patM. Finally, the secreted patulin synthase patE catalyzes the conversion of E-ascladiol to patulin. The protein is Cytochrome P450 monooxygenase patI of Aspergillus clavatus (strain ATCC 1007 / CBS 513.65 / DSM 816 / NCTC 3887 / NRRL 1 / QM 1276 / 107).